The sequence spans 292 residues: Probable septum site-determining protein MinC (292 aa).

A disordered region spans residues 112–188 (DTAPPNDVAT…PQSSSALVIT (77 aa)). Over residues 128-137 (EATAEAAAKA) the composition is skewed to low complexity. Acidic residues predominate over residues 140–150 (QDDEAYGEQAD). Over residues 171–185 (ANRPTATPPQSSSAL) the composition is skewed to polar residues.

This sequence belongs to the MinC family. In terms of assembly, interacts with MinD and FtsZ.

In terms of biological role, cell division inhibitor that blocks the formation of polar Z ring septums. Rapidly oscillates between the poles of the cell to destabilize FtsZ filaments that have formed before they mature into polar Z rings. Prevents FtsZ polymerization. The protein is Probable septum site-determining protein MinC of Bordetella bronchiseptica (strain ATCC BAA-588 / NCTC 13252 / RB50) (Alcaligenes bronchisepticus).